We begin with the raw amino-acid sequence, 89 residues long: Small ribosomal subunit protein uS15 (89 aa).

It belongs to the universal ribosomal protein uS15 family. In terms of assembly, part of the 30S ribosomal subunit. Forms a bridge to the 50S subunit in the 70S ribosome, contacting the 23S rRNA.

In terms of biological role, one of the primary rRNA binding proteins, it binds directly to 16S rRNA where it helps nucleate assembly of the platform of the 30S subunit by binding and bridging several RNA helices of the 16S rRNA. Functionally, forms an intersubunit bridge (bridge B4) with the 23S rRNA of the 50S subunit in the ribosome. The protein is Small ribosomal subunit protein uS15 of Desulfotalea psychrophila (strain LSv54 / DSM 12343).